Consider the following 218-residue polypeptide: Glycerol-3-phosphate acyltransferase (218 aa).

A run of 5 helical transmembrane segments spans residues 10-30 (LTLGIAIVGGYLLGSIPFGLI), 60-80 (DLAAITLLGDAGKGVVAVLLA), 88-108 (PAIIALAGGSAFLGHLFPVWL), 125-145 (SAAWPVGVAAGATWLAMAFLF), and 165-185 (AFDQPYPFMGLCLFMAVLIFI).

It belongs to the PlsY family. In terms of assembly, probably interacts with PlsX.

The protein resides in the cell inner membrane. It catalyses the reaction an acyl phosphate + sn-glycerol 3-phosphate = a 1-acyl-sn-glycero-3-phosphate + phosphate. It participates in lipid metabolism; phospholipid metabolism. Catalyzes the transfer of an acyl group from acyl-phosphate (acyl-PO(4)) to glycerol-3-phosphate (G3P) to form lysophosphatidic acid (LPA). This enzyme utilizes acyl-phosphate as fatty acyl donor, but not acyl-CoA or acyl-ACP. The polypeptide is Glycerol-3-phosphate acyltransferase (Caulobacter vibrioides (strain ATCC 19089 / CIP 103742 / CB 15) (Caulobacter crescentus)).